The following is a 977-amino-acid chain: Poly [ADP-ribose] polymerase 1 (977 aa).

PARP-type zinc fingers lie at residues 8–91 (WKAE…GSAP) and 104–179 (CTIE…KKDA). C20, C23, H52, C55, C116, C119, H141, and C144 together coordinate Zn(2+). Disordered regions lie at residues 177–199 (KDAPSSGQTSSKGSKRKNNQNDI) and 218–237 (DKGKAVVSHDSNANSSDLQE). The PADR1 zinc-binding domain occupies 227–365 (DSNANSSDLQ…AKKPERVLPP (139 aa)). The SAP domain occupies 254 to 288 (KKHVSTAELRNMLEANGQDTSGPERHLLDRCADGM). The segment at 291–335 (GALGTCPVCSSFLYYHGGQYHCSGYVSEWSKCTYSTTEPVRSKKK) is zinc ribbon. The Zn(2+) site is built by C296, C299, C312, and C322. Residues 381-473 (SFLSEGLDKL…RVLPFDLYKV (93 aa)) enclose the BRCT domain. One can recognise a WGR domain in the interval 504-604 (TGHILEDGKS…TNFQKQPGKF (101 aa)). One can recognise a PARP alpha-helical domain in the interval 626–745 (KSSLPPQLLE…DIEIASKLVG (120 aa)). The PARP catalytic domain occupies 752 to 977 (ESLDDKYKKL…LLKVRFHHKR (226 aa)).

It belongs to the ARTD/PARP family.

It is found in the nucleus. It catalyses the reaction NAD(+) + (ADP-D-ribosyl)n-acceptor = nicotinamide + (ADP-D-ribosyl)n+1-acceptor + H(+).. The enzyme catalyses L-aspartyl-[protein] + NAD(+) = 4-O-(ADP-D-ribosyl)-L-aspartyl-[protein] + nicotinamide. The catalysed reaction is L-glutamyl-[protein] + NAD(+) = 5-O-(ADP-D-ribosyl)-L-glutamyl-[protein] + nicotinamide. Its function is as follows. Involved in the base excision repair (BER) pathway, by catalyzing the poly(ADP-ribosyl)ation of a limited number of acceptor proteins involved in chromatin architecture and in DNA metabolism. This modification follows DNA damages and appears as an obligatory step in a detection/signaling pathway leading to the reparation of DNA strand breaks. The chain is Poly [ADP-ribose] polymerase 1 (PARP1) from Oryza sativa subsp. japonica (Rice).